A 619-amino-acid chain; its full sequence is MFDGGVPEQIHRFIASPPPPPPLPPHQPAAERSLPFPVSFSSFNTNHQPQHMLSLDSRKIIHHHHHHHHHDIKDGGATTGEWIGQTDHDDSDNHHQHHHHHPWCSDEVLALLRFRSTVENWFPEFTWEHTSRKLAEVGFKRSPQECKEKFEEEERRYFNSNNNNNNNTNDHQHIGNYNNKGNNYRIFSEVEEFYHHGHDNEHVSSEVGDNQNKRTNLVEGKGNVGETVQDLMAEDKLRDQDQGQVEEASMENQRNSIEVGKVGNVEDDAKSSSSSSLMMIMKEKKRKKRKKEKERFGVLKGFCEGLVRNMIAQQEEMHKKLLEDMVKKEEEKIAREEAWKKQEIERVNKEVEIRAQEQAMASDRNTNIIKFISKFTDHDLDVVQNPTSPSQDSSSLALRKTQGRRKFQTSSSLLPQTLTPHNLLTIDKSLEPFSTKTLKPKNQNPKPPKSDDKSDLGKRWPKDEVLALINIRRSISNMNDDDHKDENSLSTSSKAVPLWERISKKMLEIGYKRSAKRCKEKWENINKYFRKTKDVNKKRPLDSRTCPYFHQLTALYSQPPTGTTATTATTATSARDLDTRPEENRVGSQDPDISVPMHVDGDGAGDKSNVQFSGFDLEF.

2 disordered regions span residues His11–Ser41 and His62–His100. Residues Ser16 to Gln27 show a composition bias toward pro residues. A Myb-like 1 domain is found at Pro102–Glu154. Residues Val307–Ala361 adopt a coiled-coil conformation. Disordered regions lie at residues Val382–Leu414 and Ser434–Lys458. Residues Gln384–Leu396 show a composition bias toward polar residues. The segment covering Thr435–Asn444 has biased composition (low complexity). Residues Pro448–Lys458 are compositionally biased toward basic and acidic residues. In terms of domain architecture, Myb-like 2 spans Arg459–Asn526. A Nuclear localization signal motif is present at residues Ser503–Gly510. The segment at Ser557 to Phe619 is disordered. Low complexity predominate over residues Thr561–Ala574. Residues Arg575 to Arg585 are compositionally biased toward basic and acidic residues.

Its subcellular location is the nucleus. Its function is as follows. Probable transcription factor that binds specific DNA sequence. The polypeptide is Trihelix transcription factor GTL2 (Arabidopsis thaliana (Mouse-ear cress)).